The chain runs to 187 residues: ADP-ribosylation factor-like protein 9 (187 aa).

Residues 25-32 (GLDGAGKT), 69-73 (EIGGS), and 126-129 (NKQD) each bind GTP.

Belongs to the small GTPase superfamily. Arf family.

The polypeptide is ADP-ribosylation factor-like protein 9 (ARL9) (Homo sapiens (Human)).